We begin with the raw amino-acid sequence, 329 residues long: Phosphate acyltransferase (329 aa).

The protein belongs to the PlsX family. Homodimer. Probably interacts with PlsY.

It localises to the cytoplasm. The catalysed reaction is a fatty acyl-[ACP] + phosphate = an acyl phosphate + holo-[ACP]. The protein operates within lipid metabolism; phospholipid metabolism. Catalyzes the reversible formation of acyl-phosphate (acyl-PO(4)) from acyl-[acyl-carrier-protein] (acyl-ACP). This enzyme utilizes acyl-ACP as fatty acyl donor, but not acyl-CoA. This Exiguobacterium sp. (strain ATCC BAA-1283 / AT1b) protein is Phosphate acyltransferase.